Reading from the N-terminus, the 470-residue chain is 6-phospho-beta-galactosidase (470 aa).

The D-galactose 6-phosphate site is built by Gln-19, His-116, Asn-159, Glu-160, and Asn-297. The active-site Proton donor is Glu-160. The Nucleophile role is filled by Glu-375. D-galactose 6-phosphate is bound by residues Ser-430, Trp-431, Lys-437, and Tyr-439.

Belongs to the glycosyl hydrolase 1 family.

It carries out the reaction a 6-phospho-beta-D-galactoside + H2O = D-galactose 6-phosphate + an alcohol. It functions in the pathway carbohydrate metabolism; lactose degradation; D-galactose 6-phosphate and beta-D-glucose from lactose 6-phosphate: step 1/1. The chain is 6-phospho-beta-galactosidase from Staphylococcus aureus (strain USA300).